Reading from the N-terminus, the 116-residue chain is Large ribosomal subunit protein bL20 (116 aa).

It belongs to the bacterial ribosomal protein bL20 family.

Functionally, binds directly to 23S ribosomal RNA and is necessary for the in vitro assembly process of the 50S ribosomal subunit. It is not involved in the protein synthesizing functions of that subunit. The polypeptide is Large ribosomal subunit protein bL20 (Phocaeicola vulgatus (strain ATCC 8482 / DSM 1447 / JCM 5826 / CCUG 4940 / NBRC 14291 / NCTC 11154) (Bacteroides vulgatus)).